A 92-amino-acid polypeptide reads, in one-letter code: Dolichol-phosphate mannosyltransferase subunit 3 (92 aa).

A run of 2 helical transmembrane segments spans residues leucine 8–leucine 28 and valine 37–valine 57.

Belongs to the DPM3 family. As to quaternary structure, component of the dolichol-phosphate mannose (DPM) synthase complex composed of DPM1, DPM2 and DPM3; within the complex, associates with DPM1 via its C-terminal domain and with DPM2 via its N-terminal portion. This interaction stabilizes DPM1 protein.

The protein localises to the endoplasmic reticulum membrane. It functions in the pathway protein modification; protein glycosylation. Stabilizer subunit of the dolichol-phosphate mannose (DPM) synthase complex; tethers catalytic subunit DPM1 to the endoplasmic reticulum. This is Dolichol-phosphate mannosyltransferase subunit 3 (DPM3) from Homo sapiens (Human).